Here is a 138-residue protein sequence, read N- to C-terminus: uncharacterized protein (138 aa).

To phage 186 CP81.

This is an uncharacterized protein from Salmonella typhimurium (strain LT2 / SGSC1412 / ATCC 700720).